The sequence spans 622 residues: Palmitoyltransferase ZDHHC13 (622 aa).

The residue at position 1 (M1) is an N-acetylmethionine. Over 1–291 (MEGPGLGSQC…RLWRWLQKCE (291 aa)) the chain is Cytoplasmic. 7 ANK repeats span residues 43–78 (PLIEDSSNCDIVKATQYGIFERCKELVEAGYDVRQP), 81–110 (ENVSLLHWAAINNRLDLVKFYISKGAVVDQ), 115–144 (LNSTPLHWAIRQGHLPMVILLLQHGADPTL), 148–177 (EGFSSIHLAVLFQHMPIIAYLISKGQSVNM), 181–211 (NGQTPLMLSAHKVIGPEPTGFLLKFNPSLNV), 216–245 (HQNTPLHWAVAAGNVNAVDKLLEAGSSLDI), and 249–277 (KGETPLDMALQNKNQLIIHMLKTEAKMRA). The chain crosses the membrane as a helical span at residues 292 to 312 (LFLLLMLSVITMWAVGYILDF). Over 313-320 (NSDSWLLK) the chain is Lumenal. The helical transmembrane segment at 321–341 (GCLLVTLFFLTSLFPRFLVGY) threads the bilayer. Residues 342 to 347 (KNLVYL) lie on the Cytoplasmic side of the membrane. The chain crosses the membrane as a helical span at residues 348 to 368 (PTAFLLSSVFWIFMTWFILFF). Topologically, residues 369 to 370 (PD) are lumenal. Residues 371–391 (LAGAPFYFSFIFSIVAFLYFF) traverse the membrane as a helical segment. Residues 392–470 (YKTWATDPGF…RCIGFGNHHY (79 aa)) lie on the Cytoplasmic side of the membrane. The 51-residue stretch at 426–476 (TFCTSCLIRKPLRSLHCHVCNSCVARYDQHCLWTGRCIGFGNHHYYIFFLF) folds into the DHHC domain. C456 serves as the catalytic S-palmitoyl cysteine intermediate. A helical transmembrane segment spans residues 471–491 (YIFFLFFLSMVCGWIIYGSFI). At 492–518 (YWSSHCATTFKEDGLWTYLNQIVACSP) the chain is on the lumenal side. A helical membrane pass occupies residues 519-539 (WVLYILMLATFHFSWSTFLLL). Topologically, residues 540–622 (NQLFQIAFLG…PAREKVLRSV (83 aa)) are cytoplasmic.

This sequence belongs to the DHHC palmitoyltransferase family. AKR/ZDHHC17 subfamily. In terms of assembly, interacts (via ANK repeats) with CLIP3. Interacts (via ANK repeats) with DNAJC5 (via C-terminus). Interacts (via ANK repeats) with HTT. Interacts (via ANK repeats) with MAP6. Interacts (via ANK repeats) with SNAP23. Interacts (via ANK repeats) with SNAP25. May interact (via ANK repeats) with SPRED2.

The protein localises to the golgi apparatus membrane. The protein resides in the cytoplasmic vesicle membrane. The enzyme catalyses L-cysteinyl-[protein] + hexadecanoyl-CoA = S-hexadecanoyl-L-cysteinyl-[protein] + CoA. Palmitoyltransferase that could catalyze the addition of palmitate onto various protein substrates. Palmitoyltransferase for HTT and GAD2. May play a role in Mg(2+) transport. This is Palmitoyltransferase ZDHHC13 from Pongo abelii (Sumatran orangutan).